Reading from the N-terminus, the 519-residue chain is Cytochrome P450 88A1 (519 aa).

A helical transmembrane segment spans residues 1–21 (MLGVGMAAAVLLGAVALLLAD). A heme-binding site is contributed by Cys-466.

Belongs to the cytochrome P450 family. Heme serves as cofactor. In terms of tissue distribution, expressed in roots, developing leaves, the vegetative meristem, and suspension culture cells.

Its subcellular location is the membrane. It participates in plant hormone biosynthesis; gibberellin biosynthesis. The sequence is that of Cytochrome P450 88A1 (CYP88A1) from Zea mays (Maize).